A 107-amino-acid polypeptide reads, in one-letter code: Phosphoribosyl-ATP pyrophosphatase (107 aa).

This sequence belongs to the PRA-PH family.

Its subcellular location is the cytoplasm. It catalyses the reaction 1-(5-phospho-beta-D-ribosyl)-ATP + H2O = 1-(5-phospho-beta-D-ribosyl)-5'-AMP + diphosphate + H(+). It functions in the pathway amino-acid biosynthesis; L-histidine biosynthesis; L-histidine from 5-phospho-alpha-D-ribose 1-diphosphate: step 2/9. The sequence is that of Phosphoribosyl-ATP pyrophosphatase from Brucella abortus (strain S19).